We begin with the raw amino-acid sequence, 465 residues long: MRYTDGKVHDITIAYIGGGSRGWAWNLMTDLAKEESISGTVKLYDIDYDAAHDNEIIGNALSMRQDVKGKWLYKACETLEESLKGADFVIISILPGTFDEMESDVHAPEKYGIYQSVGDTVGPGGIVRALRTIPMFVDIANAIKEHCPDAWVINYTNPMTLCVRTLYEIFPQIKAFGCCHEVFGTQKLLSRALQDIEGIENVPREEIKINVLGINHFTWIDNARYKDIDLMYVYKQFVNKYYESGFVSDANNNWMNNSFVSAERVKFDLFLRYGVIAAAGDRHLAEFVPGYWYLKDPETVREWMFGLTTVSWRKEDLKRRLERSKRLKTGEEKFELKETGEEGVRQIKALLGLGDLVTNVNMPNHGQIEGIPYGAVVETNALFSGNKLKPVLSGKLPDNVNSLVLRQVYNQETTLKAALKRDFDLAFSAFVNDPLVTISLKDAKKLFKEMLENTKKYLDGWKIKA.

Position 11-78 (11-78 (ITIAYIGGGS…GKWLYKACET (68 aa))) interacts with NAD(+). Asn-157 serves as a coordination point for substrate. Mn(2+) is bound at residue Cys-179. His-180 acts as the Proton donor in catalysis. His-216 is a binding site for Mn(2+).

It belongs to the glycosyl hydrolase 4 family. Homotetramer. It depends on NAD(+) as a cofactor. Mn(2+) is required as a cofactor.

The enzyme catalyses [(1-&gt;4)-alpha-D-galacturonosyl](n) + H2O = alpha-D-galacturonate + [(1-&gt;4)-alpha-D-galacturonosyl](n-1). In terms of biological role, alpha-galacturonidase able to catalyze the hydrolysis of the chromogenic substrate p-nitrophenyl-alpha-D-galacturonic acid (pNPalphaGalUA). It is probable that alpha-1,4-di-galacturonate (GalUA(2)) is the naturally occurring substrate. In Thermoanaerobacterium saccharolyticum (strain DSM 8691 / JW/SL-YS485), this protein is Alpha-galacturonidase.